The chain runs to 387 residues: MSVIKMTDLDLAGKRVLIRADLNVPVKEGKVTSDARIRASLPTIEIALKQGARVMVTSHLGRPTEGEYNEDFSLLPVVDYLKEKLSSPVRLAKDYLDGVDVAEGELVVLENVRFNKGEKKDDEVLSKKYAALCDVFVMDAFGTAHRAQASTHGVGKFATIACAGPLLSGELEALGKALSKPARPMVAIVGGSKVSTKLTVLDSLSKIADQLIVGGGIANTFVAAQGHNVGKSLYEADLISEAKKLLETCDIPVPSDVRVASEFSETAAATLKSVTEIKDEEQILDLGDVSAERLAEILKNAKTILWNGPVGVFEFPNFRKGTEIIARAIADSDAFSIAGGGDTLAAIDLFGIADKISYISTGGGAFLEFVEGKKLPAVVMLEERAKQ.

Residues 21–23 (DLN), arginine 36, 59–62 (HLGR), arginine 113, and arginine 146 contribute to the substrate site. ATP contacts are provided by residues lysine 197, glutamate 314, and 340–343 (GGDT).

Belongs to the phosphoglycerate kinase family. In terms of assembly, monomer.

The protein resides in the cytoplasm. The enzyme catalyses (2R)-3-phosphoglycerate + ATP = (2R)-3-phospho-glyceroyl phosphate + ADP. It functions in the pathway carbohydrate degradation; glycolysis; pyruvate from D-glyceraldehyde 3-phosphate: step 2/5. The polypeptide is Phosphoglycerate kinase (Pectobacterium atrosepticum (strain SCRI 1043 / ATCC BAA-672) (Erwinia carotovora subsp. atroseptica)).